Reading from the N-terminus, the 117-residue chain is Hainantoxin-XV.2 (117 aa).

Residues 1-20 (MKLCAVIIASLLVCAAVASS) form the signal peptide. A disordered region spans residues 18–55 (ASSSDNQKEFAQEKEMTREETQSLGEHEKDDEVTGSEE). A propeptide spanning residues 21–56 (SDNQKEFAQEKEMTREETQSLGEHEKDDEVTGSEER) is cleaved from the precursor. The span at 23 to 55 (NQKEFAQEKEMTREETQSLGEHEKDDEVTGSEE) shows a compositional bias: basic and acidic residues. Disulfide bonds link Cys-58–Cys-72, Cys-65–Cys-78, Cys-69–Cys-115, and Cys-71–Cys-91.

Belongs to the neurotoxin 03 (Tx2) family. 02 subfamily. HNTX-XV sub-subfamily. In terms of tissue distribution, expressed by the venom gland.

It localises to the secreted. In terms of biological role, putative ion channel inhibitor. The sequence is that of Hainantoxin-XV.2 from Cyriopagopus hainanus (Chinese bird spider).